A 665-amino-acid chain; its full sequence is Golgi-associated RAB2B interactor protein 3 (665 aa).

Disordered stretches follow at residues 211–240, 272–296, and 480–590; these read EIRGEGDQNSRPQSSPTVSEATSAAFAGGE, AAAGTAGPAAGPAAGTAGPAAGTAG, and SEGY…GSVS. The segment covering 219–232 has biased composition (polar residues); the sequence is NSRPQSSPTVSEAT. Residues 499–513 show a composition bias toward basic and acidic residues; sequence EAKEKRERREKDRTS. Composition is skewed to basic residues over residues 514-538 and 554-566; these read SRKSSHHRRTGMSRHSSKDKSRKTS and GHGRLRGKRHSSS. A Bipartite nuclear localization signal motif is present at residues 515 to 531; it reads RKSSHHRRTGMSRHSSK. A Phosphoserine modification is found at serine 652.

It belongs to the GARIN family. As to quaternary structure, interacts (via N-terminus) with RAB2B (in GTP-bound form). Interacts with FRG1. As to expression, expressed in adult spermatocytes and spermatids.

It is found in the golgi apparatus. It localises to the nucleus. The protein resides in the cajal body. In terms of biological role, may be involved in RNA biogenesis. The polypeptide is Golgi-associated RAB2B interactor protein 3 (Mus musculus (Mouse)).